Consider the following 430-residue polypeptide: UDP-N-acetylglucosamine 1-carboxyvinyltransferase (430 aa).

22 to 23 (KN) is a binding site for phosphoenolpyruvate. R102 provides a ligand contact to UDP-N-acetyl-alpha-D-glucosamine. C126 functions as the Proton donor in the catalytic mechanism. Residue C126 is modified to 2-(S-cysteinyl)pyruvic acid O-phosphothioketal. UDP-N-acetyl-alpha-D-glucosamine contacts are provided by residues 131–135 (RPVDL), 172–175 (KVSV), D317, and I339.

This sequence belongs to the EPSP synthase family. MurA subfamily.

The protein resides in the cytoplasm. It carries out the reaction phosphoenolpyruvate + UDP-N-acetyl-alpha-D-glucosamine = UDP-N-acetyl-3-O-(1-carboxyvinyl)-alpha-D-glucosamine + phosphate. Its pathway is cell wall biogenesis; peptidoglycan biosynthesis. Cell wall formation. Adds enolpyruvyl to UDP-N-acetylglucosamine. This chain is UDP-N-acetylglucosamine 1-carboxyvinyltransferase, found in Sinorhizobium fredii (strain NBRC 101917 / NGR234).